Here is a 165-residue protein sequence, read N- to C-terminus: MATKVLPLVELKPLLGPRQRLIGIDLGTKTIGLSLSDVERRIATPLETIRRTKFTKDAERLLALADQFDVAAFVIGLPLNMDGSAGPRVQATEAFVRSLSGLTSRPFCYWDERLSTAAVTRDLIAQDASRAKRAAVVDKLAAAFILQGALDRLAWVHETADKDLP.

Belongs to the YqgF nuclease family.

The protein resides in the cytoplasm. In terms of biological role, could be a nuclease involved in processing of the 5'-end of pre-16S rRNA. This is Putative pre-16S rRNA nuclease from Beijerinckia indica subsp. indica (strain ATCC 9039 / DSM 1715 / NCIMB 8712).